We begin with the raw amino-acid sequence, 206 residues long: Ribosomal RNA large subunit methyltransferase E (206 aa).

5 residues coordinate S-adenosyl-L-methionine: glycine 60, tryptophan 62, aspartate 80, aspartate 96, and aspartate 121. The active-site Proton acceptor is the lysine 161.

The protein belongs to the class I-like SAM-binding methyltransferase superfamily. RNA methyltransferase RlmE family.

The protein localises to the cytoplasm. It carries out the reaction uridine(2552) in 23S rRNA + S-adenosyl-L-methionine = 2'-O-methyluridine(2552) in 23S rRNA + S-adenosyl-L-homocysteine + H(+). Specifically methylates the uridine in position 2552 of 23S rRNA at the 2'-O position of the ribose in the fully assembled 50S ribosomal subunit. The sequence is that of Ribosomal RNA large subunit methyltransferase E from Hahella chejuensis (strain KCTC 2396).